Reading from the N-terminus, the 61-residue chain is Protein translocase subunit SecE (61 aa).

A helical membrane pass occupies residues glycine 38–isoleucine 58.

This sequence belongs to the SecE/SEC61-gamma family. As to quaternary structure, component of the Sec protein translocase complex. Heterotrimer consisting of SecY (alpha), SecG (beta) and SecE (gamma) subunits. The heterotrimers can form oligomers, although 1 heterotrimer is thought to be able to translocate proteins. Interacts with the ribosome. May interact with SecDF, and other proteins may be involved.

The protein resides in the cell membrane. Essential subunit of the Sec protein translocation channel SecYEG. Clamps together the 2 halves of SecY. May contact the channel plug during translocation. In Thermococcus onnurineus (strain NA1), this protein is Protein translocase subunit SecE.